The following is a 289-amino-acid chain: Pantothenate synthetase (289 aa).

30 to 37 (MGYLHKGH) is an ATP binding site. The active-site Proton donor is the His37. Gln61 is a binding site for (R)-pantoate. Residue Gln61 participates in beta-alanine binding. An ATP-binding site is contributed by 147–150 (GEKD). Gln153 is a binding site for (R)-pantoate. Residues Val176 and 184–187 (CSSR) contribute to the ATP site.

It belongs to the pantothenate synthetase family. In terms of assembly, homodimer.

It localises to the cytoplasm. The catalysed reaction is (R)-pantoate + beta-alanine + ATP = (R)-pantothenate + AMP + diphosphate + H(+). It functions in the pathway cofactor biosynthesis; (R)-pantothenate biosynthesis; (R)-pantothenate from (R)-pantoate and beta-alanine: step 1/1. Its function is as follows. Catalyzes the condensation of pantoate with beta-alanine in an ATP-dependent reaction via a pantoyl-adenylate intermediate. This chain is Pantothenate synthetase, found in Brucella anthropi (strain ATCC 49188 / DSM 6882 / CCUG 24695 / JCM 21032 / LMG 3331 / NBRC 15819 / NCTC 12168 / Alc 37) (Ochrobactrum anthropi).